Here is a 328-residue protein sequence, read N- to C-terminus: Phenylalanine--tRNA ligase alpha subunit (328 aa).

A Mg(2+)-binding site is contributed by Glu-253.

It belongs to the class-II aminoacyl-tRNA synthetase family. Phe-tRNA synthetase alpha subunit type 1 subfamily. In terms of assembly, tetramer of two alpha and two beta subunits. The cofactor is Mg(2+).

Its subcellular location is the cytoplasm. The catalysed reaction is tRNA(Phe) + L-phenylalanine + ATP = L-phenylalanyl-tRNA(Phe) + AMP + diphosphate + H(+). The sequence is that of Phenylalanine--tRNA ligase alpha subunit from Actinobacillus pleuropneumoniae serotype 7 (strain AP76).